The following is a 339-amino-acid chain: Olfactory receptor 7E24 (339 aa).

Residues 1 to 43 lie on the Extracellular side of the membrane; it reads MSYFPILFFFFLKRCPSYTEPQNLTGVSEFLLLGLSEDPELQP. The N-linked (GlcNAc...) asparagine glycan is linked to asparagine 23. The chain crosses the membrane as a helical span at residues 44–64; that stretch reads VLAGLFLSMYLVTVLGNLLII. At 65–72 the chain is on the cytoplasmic side; sequence LAVSSDSH. Residues 73–93 form a helical membrane-spanning segment; sequence LHTPMYFFLSNLSLADIGFTS. The Extracellular segment spans residues 94–117; sequence TTVPKMIVDMQTHSRVISYEGCLT. Cysteine 115 and cysteine 207 are oxidised to a cystine. Residues 118-138 form a helical membrane-spanning segment; sequence QMSFFVLFACMDDMLLSVMAY. The Cytoplasmic segment spans residues 139–157; that stretch reads DRFVAICHPLHYRIIMNPR. A helical transmembrane segment spans residues 158–178; that stretch reads LCGFLILLSFFISLLDSQLHN. The Extracellular segment spans residues 179–215; the sequence is LIMLQLTCFKDVDISNFFCDPSQLLHLRCSDTFINEM. Residues 216–235 traverse the membrane as a helical segment; it reads VIYFMGAIFGCLPISGILFS. Topologically, residues 236–255 are cytoplasmic; it reads YYKIVSPILRVPTSDGKYKA. The helical transmembrane segment at 256–276 threads the bilayer; that stretch reads FSTCGSHLAVVCLFYGTGLVG. At 277 to 289 the chain is on the extracellular side; sequence YLSSAVLPSPRKS. Residues 290-310 form a helical membrane-spanning segment; the sequence is MVASVMYTVVTPMLNPFIYSL. The Cytoplasmic segment spans residues 311–339; sequence RNKDIQSALCRLHGRIIKSHHLHPFCYMG.

The protein belongs to the G-protein coupled receptor 1 family.

It is found in the cell membrane. In terms of biological role, odorant receptor. This Homo sapiens (Human) protein is Olfactory receptor 7E24 (OR7E24).